The sequence spans 111 residues: Large ribosomal subunit protein eL33z (111 aa).

The protein belongs to the eukaryotic ribosomal protein eL33 family.

The chain is Large ribosomal subunit protein eL33z (RPL35AB) from Arabidopsis thaliana (Mouse-ear cress).